Reading from the N-terminus, the 126-residue chain is RutC family protein bbp_334 (126 aa).

It belongs to the RutC family.

This chain is RutC family protein bbp_334, found in Buchnera aphidicola subsp. Baizongia pistaciae (strain Bp).